We begin with the raw amino-acid sequence, 565 residues long: Phosphomethylpyrimidine synthase (565 aa).

Substrate-binding positions include Asn203, Met232, Tyr261, His297, 317–319 (SRG), 358–361 (DGLR), and Glu397. His401 serves as a coordination point for Zn(2+). Tyr424 contributes to the substrate binding site. His465 serves as a coordination point for Zn(2+). The [4Fe-4S] cluster site is built by Cys541, Cys544, and Cys549.

This sequence belongs to the ThiC family. Requires [4Fe-4S] cluster as cofactor.

The enzyme catalyses 5-amino-1-(5-phospho-beta-D-ribosyl)imidazole + S-adenosyl-L-methionine = 4-amino-2-methyl-5-(phosphooxymethyl)pyrimidine + CO + 5'-deoxyadenosine + formate + L-methionine + 3 H(+). The protein operates within cofactor biosynthesis; thiamine diphosphate biosynthesis. In terms of biological role, catalyzes the synthesis of the hydroxymethylpyrimidine phosphate (HMP-P) moiety of thiamine from aminoimidazole ribotide (AIR) in a radical S-adenosyl-L-methionine (SAM)-dependent reaction. This Bacteroides thetaiotaomicron (strain ATCC 29148 / DSM 2079 / JCM 5827 / CCUG 10774 / NCTC 10582 / VPI-5482 / E50) protein is Phosphomethylpyrimidine synthase.